A 143-amino-acid polypeptide reads, in one-letter code: UPF0251 protein Rru_A1194 (143 aa).

Positions 100-143 (LDGSACPNRRQRRGPCARRGAAGALARQTGDEPPSSPTDNEKDD) are disordered. The segment covering 116–126 (ARRGAAGALAR) has biased composition (low complexity).

The protein belongs to the UPF0251 family.

This is UPF0251 protein Rru_A1194 from Rhodospirillum rubrum (strain ATCC 11170 / ATH 1.1.1 / DSM 467 / LMG 4362 / NCIMB 8255 / S1).